A 344-amino-acid chain; its full sequence is GTPase Obg (344 aa).

The 159-residue stretch at 1–159 (MKFLDLCKVY…RTLWLRLKLI (159 aa)) folds into the Obg domain. Positions 126–146 (GNLHFKSSTNQAPRRSNPGQD) are disordered. Over residues 130–144 (FKSSTNQAPRRSNPG) the composition is skewed to polar residues. An OBG-type G domain is found at 160 to 327 (ADVGLLGLPN…VLRKLRGEIS (168 aa)). GTP is bound by residues 166–173 (GLPNAGKS), 191–195 (FTTLH), 212–215 (DIPG), 279–282 (NKID), and 308–310 (SGV). Positions 173 and 193 each coordinate Mg(2+).

This sequence belongs to the TRAFAC class OBG-HflX-like GTPase superfamily. OBG GTPase family. As to quaternary structure, monomer. Requires Mg(2+) as cofactor.

It is found in the cytoplasm. Its function is as follows. An essential GTPase which binds GTP, GDP and possibly (p)ppGpp with moderate affinity, with high nucleotide exchange rates and a fairly low GTP hydrolysis rate. Plays a role in control of the cell cycle, stress response, ribosome biogenesis and in those bacteria that undergo differentiation, in morphogenesis control. In Roseobacter denitrificans (strain ATCC 33942 / OCh 114) (Erythrobacter sp. (strain OCh 114)), this protein is GTPase Obg.